The primary structure comprises 254 residues: Phosphoribosylaminoimidazole-succinocarboxamide synthase (254 aa).

Belongs to the SAICAR synthetase family.

The enzyme catalyses 5-amino-1-(5-phospho-D-ribosyl)imidazole-4-carboxylate + L-aspartate + ATP = (2S)-2-[5-amino-1-(5-phospho-beta-D-ribosyl)imidazole-4-carboxamido]succinate + ADP + phosphate + 2 H(+). It participates in purine metabolism; IMP biosynthesis via de novo pathway; 5-amino-1-(5-phospho-D-ribosyl)imidazole-4-carboxamide from 5-amino-1-(5-phospho-D-ribosyl)imidazole-4-carboxylate: step 1/2. The chain is Phosphoribosylaminoimidazole-succinocarboxamide synthase from Brucella canis (strain ATCC 23365 / NCTC 10854 / RM-666).